The sequence spans 415 residues: Cell division control protein 11 (415 aa).

The residue at position 2 (Ser2) is an N-acetylserine. At Ser2 the chain carries Phosphoserine. The Basic motif signature appears at 12 to 19; it reads RKRKHLKR. Residues 19–298 form the Septin-type G domain; that stretch reads RGITFTVMIV…ERYRTEALSG (280 aa). The tract at residues 29-36 is G1 motif; sequence GQSGSGRS. GTP-binding positions include 29–36, Gly92, 172–180, Gly230, and Arg247; these read GQSGSGRS and KSDSLTRDE. A G3 motif region spans residues 89-92; the sequence is DTPG. The tract at residues 171–174 is G4 motif; sequence SKSD. Residue Ser305 is modified to Phosphoserine. The interval 307–360 is disordered; sequence RPNLTKLNGSSSSSTTTRRNTNPFKQSNNINNDVLNPASDMHGQSTGENNETYM. Residues 316–328 show a composition bias toward low complexity; that stretch reads SSSSSTTTRRNTN. At Thr327 the chain carries Phosphothreonine. Polar residues-rich tracts occupy residues 329–340 and 348–359; these read PFKQSNNINNDV and HGQSTGENNETY. Positions 354–414 form a coiled coil; the sequence is ENNETYMTRE…LEKEAKIKQE (61 aa). Residue Lys412 forms a Glycyl lysine isopeptide (Lys-Gly) (interchain with G-Cter in SUMO) linkage.

This sequence belongs to the TRAFAC class TrmE-Era-EngA-EngB-Septin-like GTPase superfamily. Septin GTPase family. As to quaternary structure, component of the septin complex which consists of CDC3, CDC10, CDC11, CDC12 and probably SHS1 and rearranges to a cortical collar of highly ordered filaments at the mother-bud-neck. A complex formed by CDC3, CDC10, CDC11 and CDC12 is capable of forming long filaments in vitro and the components seem to be present in a 2:2:2:2 arrangement in vivo. The filaments are proposed to be formed by the end-to-end polymerization of CDC3-CDC12-CDC11 complexes with CDC10 serving as a bridge to bundle the polymers into paired filaments. Component of the GIN4 complex composed of at least BNI5, CDC3, CDC10, CDC11, CDC12, GIN4, NAP1 and SHS1. Self-associates. Interacts with BEM4, KCC4, SPR28 and SYP1. Interacts with BNI5. In terms of processing, sumoylated during mitosis on the mother cell side of the bud neck. Sumoylation probably plays a central role in regulating septin ring disassembly during the cell cycle.

Its subcellular location is the membrane. The protein localises to the bud neck. Its function is as follows. Septins are GTPases involved in cytokinesis that assemble early in the cell cycle as a patch at the incipient bud site and form a ring approximate 15 minutes before bud emergence, which transforms into an hour-glass shaped collar of cortical filaments that spans both sides of the mother-bud neck. This collar persists until just before cytokinesis, when it splits into two rings that occupy opposite sides of the neck. The septins at the bud neck serve as a structural scaffold that recruits different components involved in diverse processes at specific stages during the cell cycle. Many proteins bind asymmetrically to the septin collar. The septin assembly is regulated by protein kinases GIN4 and/or CLA4. May act by recruiting MYO1 and HOF1, a protein involved in septation, to the site of cleavage. Septins are also involved in cell morphogenesis, bud site selection, chitin deposition, cell cycle regulation, cell compartmentalization and spore wall formation. CDCd11 with SHS1 11 are involved in the recruitment of BNI5 and thereby ensure efficient localization at the bud neck of MYO1, the type II myosin of the actomyosin contractile ring. The sequence is that of Cell division control protein 11 from Saccharomyces cerevisiae (strain ATCC 204508 / S288c) (Baker's yeast).